A 926-amino-acid chain; its full sequence is Translation initiation factor IF-2 (926 aa).

2 disordered regions span residues 1 to 185 (MTDS…EEVE) and 200 to 299 (EDKA…RRRG). Low complexity-rich tracts occupy residues 13 to 24 (TGKKTLTLKPTG) and 70 to 96 (APAT…AAPQ). Polar residues predominate over residues 110-133 (TNQYSQQRHPGQQNRPQASSQPSR). Residues 151-185 (MDARRRALAEAQVREVEDAKRRAEEEVRRQAEEVE) show a composition bias toward basic and acidic residues. A compositionally biased stretch (low complexity) spans 211–251 (APEPVAEPVAPVAETPRAADPAPRAPSPAGAKPAAGAPAPS). A tr-type G domain is found at 424-591 (SRPPVVTIMG…AVLLQAEILD (168 aa)). Positions 433-440 (GHVDHGKT) are G1. 433-440 (GHVDHGKT) is a binding site for GTP. The segment at 458 to 462 (GITQH) is G2. The interval 479–482 (DTPG) is G3. GTP-binding positions include 479–483 (DTPGH) and 533–536 (NKID). Residues 533 to 536 (NKID) form a G4 region. Residues 569 to 571 (SAK) form a G5 region.

It belongs to the TRAFAC class translation factor GTPase superfamily. Classic translation factor GTPase family. IF-2 subfamily.

Its subcellular location is the cytoplasm. In terms of biological role, one of the essential components for the initiation of protein synthesis. Protects formylmethionyl-tRNA from spontaneous hydrolysis and promotes its binding to the 30S ribosomal subunits. Also involved in the hydrolysis of GTP during the formation of the 70S ribosomal complex. The protein is Translation initiation factor IF-2 of Allorhizobium ampelinum (strain ATCC BAA-846 / DSM 112012 / S4) (Agrobacterium vitis (strain S4)).